A 127-amino-acid chain; its full sequence is Small ribosomal subunit protein eS8 (127 aa).

Residues 1 to 33 form a disordered region; sequence MAIWQGKSMKKPSGGRAKMNRGKRKYELGREPA.

Belongs to the eukaryotic ribosomal protein eS8 family. Part of the 30S ribosomal subunit.

This is Small ribosomal subunit protein eS8 (rps8e) from Methanothermobacter thermautotrophicus (strain ATCC 29096 / DSM 1053 / JCM 10044 / NBRC 100330 / Delta H) (Methanobacterium thermoautotrophicum).